A 79-amino-acid chain; its full sequence is Protein RALF-like 15 (79 aa).

The N-terminal stretch at Met1–Ala28 is a signal peptide. 2 cysteine pairs are disulfide-bonded: Cys46–Cys54 and Cys66–Cys72.

Belongs to the plant rapid alkalinization factor (RALF) family.

The protein resides in the secreted. Functionally, cell signaling peptide that may regulate plant stress, growth, and development. Mediates a rapid alkalinization of extracellular space by mediating a transient increase in the cytoplasmic Ca(2+) concentration leading to a calcium-dependent signaling events through a cell surface receptor and a concomitant activation of some intracellular mitogen-activated protein kinases. This chain is Protein RALF-like 15 (RALFL15), found in Arabidopsis thaliana (Mouse-ear cress).